We begin with the raw amino-acid sequence, 328 residues long: Nicotianamine synthase 1 (328 aa).

This sequence belongs to the nicotianamine synthase (NAS)-like family. As to expression, in roots but not in leaves.

The catalysed reaction is 3 S-adenosyl-L-methionine = nicotianamine + 3 S-methyl-5'-thioadenosine + 3 H(+). Its function is as follows. Synthesizes nicotianamine, a polyamine that is the first intermediate in the synthesis of the phytosiderophores of the mugineic acid type found in gramineae which serves as a sensor for the physiological iron status within the plant, and/or might be involved in the transport of iron. This chain is Nicotianamine synthase 1 (NAS1), found in Hordeum vulgare (Barley).